Consider the following 364-residue polypeptide: Anhydro-N-acetylmuramic acid kinase (364 aa).

11–18 (GSSLDGID) serves as a coordination point for ATP.

Belongs to the anhydro-N-acetylmuramic acid kinase family.

It carries out the reaction 1,6-anhydro-N-acetyl-beta-muramate + ATP + H2O = N-acetyl-D-muramate 6-phosphate + ADP + H(+). Its pathway is amino-sugar metabolism; 1,6-anhydro-N-acetylmuramate degradation. It participates in cell wall biogenesis; peptidoglycan recycling. In terms of biological role, catalyzes the specific phosphorylation of 1,6-anhydro-N-acetylmuramic acid (anhMurNAc) with the simultaneous cleavage of the 1,6-anhydro ring, generating MurNAc-6-P. Is required for the utilization of anhMurNAc either imported from the medium or derived from its own cell wall murein, and thus plays a role in cell wall recycling. The protein is Anhydro-N-acetylmuramic acid kinase of Pseudomonas syringae pv. tomato (strain ATCC BAA-871 / DC3000).